Reading from the N-terminus, the 242-residue chain is Ribose-5-phosphate isomerase A (242 aa).

Substrate-binding positions include 39–42, 95–98, and 108–111; these read SGST, DGAD, and KGGG. E117 serves as the catalytic Proton acceptor. K135 serves as a coordination point for substrate.

The protein belongs to the ribose 5-phosphate isomerase family. As to quaternary structure, homodimer.

It catalyses the reaction aldehydo-D-ribose 5-phosphate = D-ribulose 5-phosphate. It functions in the pathway carbohydrate degradation; pentose phosphate pathway; D-ribose 5-phosphate from D-ribulose 5-phosphate (non-oxidative stage): step 1/1. Its function is as follows. Catalyzes the reversible conversion of ribose-5-phosphate to ribulose 5-phosphate. The polypeptide is Ribose-5-phosphate isomerase A (Chlamydia trachomatis serovar D (strain ATCC VR-885 / DSM 19411 / UW-3/Cx)).